Here is a 194-residue protein sequence, read N- to C-terminus: uncharacterized protein (194 aa).

Polar residues predominate over residues 77-92; that stretch reads QTQPQHQTLSQHLPQT. A disordered region spans residues 77–96; sequence QTQPQHQTLSQHLPQTHHTD. The helical transmembrane segment at 169-189 threads the bilayer; it reads FWEILLLIILIAVLVYGIYWL.

It localises to the host membrane. Its subcellular location is the virion. This is an uncharacterized protein from Acanthamoeba polyphaga (Amoeba).